The sequence spans 305 residues: Ribosomal RNA small subunit methyltransferase H (305 aa).

Residues 30 to 32 (GGH), D49, F74, D96, and Q103 each bind S-adenosyl-L-methionine.

It belongs to the methyltransferase superfamily. RsmH family.

The protein resides in the cytoplasm. It catalyses the reaction cytidine(1402) in 16S rRNA + S-adenosyl-L-methionine = N(4)-methylcytidine(1402) in 16S rRNA + S-adenosyl-L-homocysteine + H(+). Its function is as follows. Specifically methylates the N4 position of cytidine in position 1402 (C1402) of 16S rRNA. The sequence is that of Ribosomal RNA small subunit methyltransferase H from Francisella tularensis subsp. holarctica (strain LVS).